The following is a 182-amino-acid chain: uncharacterized protein (182 aa).

The N-terminal stretch at M1 to G26 is a signal peptide. The tract at residues Y68–T90 is disordered. The segment covering P74 to T90 has biased composition (low complexity).

This is an uncharacterized protein from Dryophytes versicolor (chameleon treefrog).